The sequence spans 316 residues: Ribosomal RNA small subunit methyltransferase H (316 aa).

S-adenosyl-L-methionine contacts are provided by residues 35–37 (SGH), Asp-55, Phe-84, Asp-105, and Gln-112.

This sequence belongs to the methyltransferase superfamily. RsmH family.

It is found in the cytoplasm. The enzyme catalyses cytidine(1402) in 16S rRNA + S-adenosyl-L-methionine = N(4)-methylcytidine(1402) in 16S rRNA + S-adenosyl-L-homocysteine + H(+). In terms of biological role, specifically methylates the N4 position of cytidine in position 1402 (C1402) of 16S rRNA. The protein is Ribosomal RNA small subunit methyltransferase H of Streptococcus equi subsp. equi (strain 4047).